The following is a 203-amino-acid chain: Peptide deformylase (203 aa).

Fe cation contacts are provided by cysteine 130 and histidine 173. Residue glutamate 174 is part of the active site. Histidine 177 lines the Fe cation pocket.

This sequence belongs to the polypeptide deformylase family. It depends on Fe(2+) as a cofactor.

The enzyme catalyses N-terminal N-formyl-L-methionyl-[peptide] + H2O = N-terminal L-methionyl-[peptide] + formate. In terms of biological role, removes the formyl group from the N-terminal Met of newly synthesized proteins. Requires at least a dipeptide for an efficient rate of reaction. N-terminal L-methionine is a prerequisite for activity but the enzyme has broad specificity at other positions. The sequence is that of Peptide deformylase from Streptococcus pneumoniae serotype 19F (strain G54).